A 211-amino-acid polypeptide reads, in one-letter code: Proline-rich 33 kDa extensin-related protein (211 aa).

The signal sequence occupies residues 1 to 14 (AILGVAIFAAPSLA). 2 stretches are compositionally biased toward pro residues: residues 25–59 (PPVY…PVHK) and 82–93 (HKPPVYKPPVQK). A disordered region spans residues 25 to 211 (PPVYTPPVHK…RHPPVENTGN (187 aa)). Basic residues-rich tracts occupy residues 101–111 (PVHKPPIHKPP) and 127–139 (PIHK…RPPV). Composition is skewed to basic and acidic residues over residues 142-159 (PPTE…EHKP) and 167-177 (KTEKPVPEHKP). A compositionally biased stretch (pro residues) spans 179 to 198 (HLPPIVVRPPPTHKPNPPYG).

Belongs to the plant proline-rich protein superfamily. ENOD12 family.

The protein resides in the secreted. The protein localises to the cell wall. This Daucus carota (Wild carrot) protein is Proline-rich 33 kDa extensin-related protein.